Reading from the N-terminus, the 125-residue chain is Small ribosomal subunit protein uS13 (125 aa).

The disordered stretch occupies residues 92 to 125 (RRSLPVRGQNTQTNARTRKGKRKTVAGKKKAARK). The segment covering 107-125 (RTRKGKRKTVAGKKKAARK) has biased composition (basic residues).

The protein belongs to the universal ribosomal protein uS13 family. As to quaternary structure, part of the 30S ribosomal subunit. Forms a loose heterodimer with protein S19. Forms two bridges to the 50S subunit in the 70S ribosome.

Located at the top of the head of the 30S subunit, it contacts several helices of the 16S rRNA. In the 70S ribosome it contacts the 23S rRNA (bridge B1a) and protein L5 of the 50S subunit (bridge B1b), connecting the 2 subunits; these bridges are implicated in subunit movement. Contacts the tRNAs in the A and P-sites. This is Small ribosomal subunit protein uS13 from Chlorobium luteolum (strain DSM 273 / BCRC 81028 / 2530) (Pelodictyon luteolum).